Here is a 91-residue protein sequence, read N- to C-terminus: Large ribosomal subunit protein uL23 (91 aa).

It belongs to the universal ribosomal protein uL23 family. In terms of assembly, part of the 50S ribosomal subunit. Contacts protein L29, and trigger factor when it is bound to the ribosome.

In terms of biological role, one of the early assembly proteins it binds 23S rRNA. One of the proteins that surrounds the polypeptide exit tunnel on the outside of the ribosome. Forms the main docking site for trigger factor binding to the ribosome. The protein is Large ribosomal subunit protein uL23 of Staphylococcus haemolyticus (strain JCSC1435).